The following is a 378-amino-acid chain: Alkaline elastase YaB (378 aa).

The N-terminal stretch at 1 to 27 (MNKKMGKIVAGTALIISVAFSSSIAQA) is a signal peptide. A propeptide spanning residues 28–110 (AEEAKEKYLI…IEEDAEVTTM (83 aa)) is cleaved from the precursor. Gln-111 serves as a coordination point for Ca(2+). In terms of domain architecture, Peptidase S8 spans 114–377 (PWGINRVQAP…SGLVNAEAAT (264 aa)). Asp-141 functions as the Charge relay system in the catalytic mechanism. Ca(2+) is bound at residue Asp-149. Catalysis depends on His-171, which acts as the Charge relay system. Leu-182, Asn-184, Ile-186, Val-188, Ala-272, Tyr-274, and Ala-277 together coordinate Ca(2+). Ser-324 (charge relay system) is an active-site residue.

The protein belongs to the peptidase S8 family. Requires Ca(2+) as cofactor.

It is found in the secreted. In terms of biological role, digests elastin efficiently, has a substrate preference for Ala in P1 position. The chain is Alkaline elastase YaB (ale) from Bacillus sp. (strain YaB).